Consider the following 162-residue polypeptide: Mediator of RNA polymerase II transcription subunit 31 (162 aa).

A disordered region spans residues 131 to 162 (VQGGQNVEAGDTGHNEGDQGTQQDKENIALKT). A compositionally biased stretch (basic and acidic residues) spans 141–162 (DTGHNEGDQGTQQDKENIALKT).

The protein belongs to the Mediator complex subunit 31 family. As to quaternary structure, component of the Mediator complex.

The protein resides in the nucleus. Its function is as follows. Component of the Mediator complex, a coactivator involved in the regulated transcription of nearly all RNA polymerase II-dependent genes. Mediator functions as a bridge to convey information from gene-specific regulatory proteins to the basal RNA polymerase II transcription machinery. Mediator is recruited to promoters by direct interactions with regulatory proteins and serves as a scaffold for the assembly of a functional preinitiation complex with RNA polymerase II and the general transcription factors. This is Mediator of RNA polymerase II transcription subunit 31 (soh1) from Aspergillus fumigatus (strain ATCC MYA-4609 / CBS 101355 / FGSC A1100 / Af293) (Neosartorya fumigata).